A 220-amino-acid chain; its full sequence is Adenylate kinase (220 aa).

10–15 (GAGKGT) is an ATP binding site. The tract at residues 30-59 (STGDMLRAAVKAGSPLGVEAKGYMDAGKLV) is NMP. Residues Thr-31, Arg-36, 57 to 59 (KLV), 85 to 88 (GFPR), and Gln-92 each bind AMP. The tract at residues 122 to 159 (GRRTHAASGRTYHVKFNPPKVEGQDDVTGEPLIQRDDD) is LID. ATP is bound by residues Arg-123 and 132-133 (TY). AMP-binding residues include Arg-156 and Arg-167. Gly-206 is a binding site for ATP.

The protein belongs to the adenylate kinase family. In terms of assembly, monomer.

The protein resides in the cytoplasm. The catalysed reaction is AMP + ATP = 2 ADP. It participates in purine metabolism; AMP biosynthesis via salvage pathway; AMP from ADP: step 1/1. In terms of biological role, catalyzes the reversible transfer of the terminal phosphate group between ATP and AMP. Plays an important role in cellular energy homeostasis and in adenine nucleotide metabolism. This chain is Adenylate kinase, found in Burkholderia vietnamiensis (strain G4 / LMG 22486) (Burkholderia cepacia (strain R1808)).